The primary structure comprises 400 residues: Glutamyl-tRNA reductase (400 aa).

Substrate contacts are provided by residues 45 to 48, Ser103, 108 to 110, and Gln114; these read TCNR and EDQ. Cys46 acts as the Nucleophile in catalysis. Residue 179–184 participates in NADP(+) binding; that stretch reads GYGEIG.

Belongs to the glutamyl-tRNA reductase family. Homodimer.

It catalyses the reaction (S)-4-amino-5-oxopentanoate + tRNA(Glu) + NADP(+) = L-glutamyl-tRNA(Glu) + NADPH + H(+). Its pathway is porphyrin-containing compound metabolism; protoporphyrin-IX biosynthesis; 5-aminolevulinate from L-glutamyl-tRNA(Glu): step 1/2. Catalyzes the NADPH-dependent reduction of glutamyl-tRNA(Glu) to glutamate 1-semialdehyde (GSA). This chain is Glutamyl-tRNA reductase, found in Clostridium perfringens (strain 13 / Type A).